The primary structure comprises 81 residues: Insulin-like growth factor 1 (81 aa).

A propeptide spanning residues 1 to 4 (FASA) is cleaved from the precursor. A b region spans residues 5-33 (GPETLCGAELVDALQFVCGDRGFYFNKPT). Disulfide bonds link C10-C52, C22-C65, and C51-C56. Residues 34-45 (GYGSSSRRAPQT) form a c region. The segment at 46–66 (GIVDECCFRSCDLRRLEMYCA) is a. The segment at 67–74 (PLKPAKAA) is d. Residues 75–81 (RSVRAQR) constitute a propeptide, e peptide.

This sequence belongs to the insulin family. As to quaternary structure, forms a ternary complex with IGFR1 and ITGAV:ITGB3. Forms a ternary complex with IGFR1 and ITGA6:ITGB4.

The protein resides in the secreted. Functionally, the insulin-like growth factors, isolated from plasma, are structurally and functionally related to insulin but have a much higher growth-promoting activity. May be a physiological regulator of [1-14C]-2-deoxy-D-glucose (2DG) transport and glycogen synthesis in osteoblasts. Stimulates glucose transport in bone-derived osteoblastic (PyMS) cells and is effective at much lower concentrations than insulin, not only regarding glycogen and DNA synthesis but also with regard to enhancing glucose uptake. May play a role in synapse maturation. Ca(2+)-dependent exocytosis of IGF1 is required for sensory perception of smell in the olfactory bulb. Acts as a ligand for IGF1R. Binds to the alpha subunit of IGF1R, leading to the activation of the intrinsic tyrosine kinase activity which autophosphorylates tyrosine residues in the beta subunit thus initiating a cascade of down-stream signaling events leading to activation of the PI3K-AKT/PKB and the Ras-MAPK pathways. Binds to integrins ITGAV:ITGB3 and ITGA6:ITGB4. Its binding to integrins and subsequent ternary complex formation with integrins and IGFR1 are essential for IGF1 signaling. Induces the phosphorylation and activation of IGFR1, MAPK3/ERK1, MAPK1/ERK2 and AKT1. As part of the MAPK/ERK signaling pathway, acts as a negative regulator of apoptosis in cardiomyocytes via promotion of STUB1/CHIP-mediated ubiquitination and degradation of ICER-type isoforms of CREM. The protein is Insulin-like growth factor 1 of Suncus murinus (Asian house shrew).